Consider the following 759-residue polypeptide: Rab guanine nucleotide exchange factor SEC2 (759 aa).

At Met1 the chain carries N-acetylmethionine. Positions 26-164 (DKQSHLEEQL…KKVMHSLDNE (139 aa)) form a coiled coil. At Thr168 the chain carries Phosphothreonine. A Phosphoserine modification is found at Ser171. The required for proper polarized localization of the protein stretch occupies residues 451-508 (TKNKPKMEIFSSETNAKPGQPTTNIQRAWLQLCKLRCILHWTHIGIWAVDDSISSKIG). Phosphoserine is present on Ser515. Residues 538–759 (KRPFSSSSAE…DNFDDAQEQQ (222 aa)) are disordered. Positions 555–576 (FDFESGDMENEITGESSSDESS) are enriched in acidic residues. Low complexity-rich tracts occupy residues 577-589 (SDGSSTDNSTADS) and 597-612 (LADSTTSSADSSSPES). Residues 648–664 (RSIIKKKAPQRKIQKKK) show a composition bias toward basic residues. Residues 651–682 (IKKKAPQRKIQKKKLLQDLDDLEEQFREESAI) adopt a coiled-coil conformation. Residues 690-703 (AESNVKQNISSKRA) are compositionally biased toward polar residues. Positions 704–719 (SSGDENSKKDNNEKTL) are enriched in basic and acidic residues. Residues 731-744 (EQIGENSPSSGLHA) show a composition bias toward polar residues. Residues 732-759 (QIGENSPSSGLHASSSNDDNFDDAQEQQ) are a coiled coil. A compositionally biased stretch (acidic residues) spans 750 to 759 (DNFDDAQEQQ).

The protein belongs to the SEC2 family. As to quaternary structure, interacts with SEC4. Interacts with YPT32, preferentially in its GTP-bound form.

The protein localises to the bud neck. Its subcellular location is the bud tip. It localises to the cytoplasmic vesicle. It is found in the secretory vesicle. Functionally, guanine nucleotide exchange factor for SEC4, catalyzing the dissociation of GDP from SEC4 and also potently promoting binding of GTP. Activation of SEC4 by SEC2 is needed for the directed transport of vesicles to sites of exocytosis. Binds the Rab GTPase YPT32, but does not have exchange activity on YPT32. This is Rab guanine nucleotide exchange factor SEC2 (SEC2) from Saccharomyces cerevisiae (strain ATCC 204508 / S288c) (Baker's yeast).